Reading from the N-terminus, the 239-residue chain is tRNA (guanine-N(7)-)-methyltransferase (239 aa).

S-adenosyl-L-methionine contacts are provided by glutamate 69, glutamate 94, aspartate 121, and aspartate 144. The active site involves aspartate 144. Substrate is bound by residues lysine 148, aspartate 180, and 217–220; that span reads TKFE.

Belongs to the class I-like SAM-binding methyltransferase superfamily. TrmB family.

It catalyses the reaction guanosine(46) in tRNA + S-adenosyl-L-methionine = N(7)-methylguanosine(46) in tRNA + S-adenosyl-L-homocysteine. It participates in tRNA modification; N(7)-methylguanine-tRNA biosynthesis. In terms of biological role, catalyzes the formation of N(7)-methylguanine at position 46 (m7G46) in tRNA. In Alcanivorax borkumensis (strain ATCC 700651 / DSM 11573 / NCIMB 13689 / SK2), this protein is tRNA (guanine-N(7)-)-methyltransferase.